A 396-amino-acid polypeptide reads, in one-letter code: Elongation factor Tu (396 aa).

Residues 10–206 (KLHVNVGTIG…ALDTHIPNPE (197 aa)) form the tr-type G domain. Residues 19–26 (GHVDHGKT) are G1. GTP is bound at residue 19 to 26 (GHVDHGKT). Position 26 (threonine 26) interacts with Mg(2+). The interval 60–64 (GITIS) is G2. Residues 81–84 (DCPG) are G3. Residues 81–85 (DCPGH) and 136–139 (NKAD) contribute to the GTP site. The tract at residues 136-139 (NKAD) is G4. Residues 174–176 (SAL) are G5.

Belongs to the TRAFAC class translation factor GTPase superfamily. Classic translation factor GTPase family. EF-Tu/EF-1A subfamily. Monomer.

It localises to the cytoplasm. It catalyses the reaction GTP + H2O = GDP + phosphate + H(+). GTP hydrolase that promotes the GTP-dependent binding of aminoacyl-tRNA to the A-site of ribosomes during protein biosynthesis. The protein is Elongation factor Tu of Xylella fastidiosa (strain 9a5c).